Here is a 391-residue protein sequence, read N- to C-terminus: Putative gustatory receptor 36a (391 aa).

Topologically, residues 1 to 3 (MFD) are cytoplasmic. The chain crosses the membrane as a helical span at residues 4–24 (WVGLLLKVLYYYGQIIGLINF). The Extracellular segment spans residues 25-38 (EIDWQRGRVVAAQR). Residues 39–59 (GILFAIAINVLICMVLLLQIS) form a helical membrane-spanning segment. Over 60–73 (KKFNLDVYFGRANQ) the chain is Cytoplasmic. A helical membrane pass occupies residues 74–94 (LHQYVIIVMVSLRMASGISAI). Topologically, residues 95-126 (LNRWRQRAQLMRLVECVLRLFLKKPHVKQMSR) are extracellular. Residues 127–147 (WAILVKFSVGVVSNFLQMAIS) traverse the membrane as a helical segment. Residues 148–165 (MESLDRLGFNEFVGMASD) lie on the Cytoplasmic side of the membrane. The helical transmembrane segment at 166 to 186 (FWMSAIINMAISQHYLVILFV) threads the bilayer. Topologically, residues 187-247 (RAYYHLLKTE…LQSIVTQLNQ (61 aa)) are extracellular. Residues 248 to 268 (VFGIQGIMVYGGYYIFSVATT) traverse the membrane as a helical segment. Residues 269–290 (YITYSLAINGIEELHLSVRAAA) are Cytoplasmic-facing. A helical transmembrane segment spans residues 291 to 311 (LVFSWFLFYYTSAILNLFVML). Residues 312–391 (KLFDDHKEME…FLIQYDMEYF (80 aa)) are Extracellular-facing.

This sequence belongs to the insect chemoreceptor superfamily. Gustatory receptor (GR) family. Gr22e subfamily.

Its subcellular location is the cell membrane. Functionally, probable gustatory receptor which mediates acceptance or avoidance behavior, depending on its substrates. The polypeptide is Putative gustatory receptor 36a (Gr36a) (Drosophila melanogaster (Fruit fly)).